The chain runs to 335 residues: tRNA N6-adenosine threonylcarbamoyltransferase (335 aa).

Fe cation-binding residues include H110 and H114. Substrate-binding positions include 132 to 136, D165, G178, and N271; that span reads LVSGG. D299 is a binding site for Fe cation.

The protein belongs to the KAE1 / TsaD family. It depends on Fe(2+) as a cofactor.

It is found in the cytoplasm. The enzyme catalyses L-threonylcarbamoyladenylate + adenosine(37) in tRNA = N(6)-L-threonylcarbamoyladenosine(37) in tRNA + AMP + H(+). In terms of biological role, required for the formation of a threonylcarbamoyl group on adenosine at position 37 (t(6)A37) in tRNAs that read codons beginning with adenine. Is involved in the transfer of the threonylcarbamoyl moiety of threonylcarbamoyl-AMP (TC-AMP) to the N6 group of A37, together with TsaE and TsaB. TsaD likely plays a direct catalytic role in this reaction. This Campylobacter jejuni subsp. jejuni serotype O:2 (strain ATCC 700819 / NCTC 11168) protein is tRNA N6-adenosine threonylcarbamoyltransferase.